Reading from the N-terminus, the 257-residue chain is Protein CUSTOS (257 aa).

Over residues 1 to 11 (MSDLESSSSSS) the composition is skewed to low complexity. Residues 1 to 72 (MSDLESSSSS…HEQDGNELQT (72 aa)) form a disordered region. Residues 32-41 (QRPRGPEKPG) are compositionally biased toward basic and acidic residues. Serine 55 bears the Phosphoserine mark. Threonine 73 is subject to Phosphothreonine. 2 disordered regions span residues 120 to 157 (FTSIPGGPEKEAAPQPCRKRLPSSSSSDDGDEELRRCR) and 170 to 257 (SAIH…VPSN). 2 stretches are compositionally biased toward basic residues: residues 180 to 190 (KKKKRKLKKKA) and 227 to 237 (TKKKKRKKKTK). The short motif at 228-236 (KKKKRKKKT) is the Nucleolar localization signal (NLS) element.

The protein belongs to the CUSTOS family.

The protein localises to the nucleus envelope. In terms of biological role, plays a role in the regulation of Wnt signaling pathway during early development. The protein is Protein CUSTOS of Bos taurus (Bovine).